A 273-amino-acid chain; its full sequence is Protein PERCC1 (273 aa).

Disordered stretches follow at residues 18-84 and 253-273; these read SHES…PETP and GGSELQSGGTQGLEGTQLAEV. Acidic residues predominate over residues 28-56; that stretch reads EAPEISEEEEEEEEEEEEEEEEEEVDQDQ. A compositionally biased stretch (polar residues) spans 67–83; that stretch reads DSQSSGVVPQDPSSPET.

As to expression, specifically expressed in the stomach, pancreas and intestine. In gastrointestinal tissue, expression is primarily restricted to gastric G cells and duodenal enteroendocrine cells (EECs).

Functionally, plays a critical role in intestinal function by promoting the development of enteroendocrine cells (EECs) of the gastrointestinal tract and pancreas. It is thereby required for normal enteroendocrine peptide hormone secretion. The polypeptide is Protein PERCC1 (Mus musculus (Mouse)).